The primary structure comprises 475 residues: Cytosolic non-specific dipeptidase (475 aa).

Ala-2 carries the post-translational modification N-acetylalanine. The residue at position 9 (Lys-9) is an N6-acetyllysine. The residue at position 58 (Ser-58) is a Phosphoserine. His-99 contributes to the Mn(2+) binding site. The active site involves Asp-101. A Mn(2+)-binding site is contributed by Asp-132. Glu-166 serves as the catalytic Proton acceptor. Residues 166–167 (EE), Asp-195, and His-228 contribute to the substrate site. Positions 167 and 195 each coordinate Mn(2+). Ser-299 carries the phosphoserine modification. Positions 330, 343, 417, and 445 each coordinate substrate. His-445 is a Mn(2+) binding site.

It belongs to the peptidase M20A family. Homodimer. Requires Mn(2+) as cofactor. In terms of tissue distribution, ubiquitously expressed with higher levels in kidney and liver (at protein level). Expressed in peripheral blood leukocytes. Expressed in gastric mucosa and down-regulated in gastric cancer mucosal tissues (at protein level). Broadly expressed in fetal tissues. Expressed in adult liver and placenta.

The protein resides in the cytoplasm. It catalyses the reaction Hydrolysis of dipeptides, preferentially hydrophobic dipeptides including prolyl amino acids.. The enzyme catalyses L-threonyl-L-threonine + H2O = 2 L-threonine. The catalysed reaction is L-threonyl-L-serine + H2O = L-threonine + L-serine. It carries out the reaction L-seryl-L-threonine + H2O = L-threonine + L-serine. It catalyses the reaction L-cysteinylglycine + H2O = L-cysteine + glycine. The enzyme catalyses L-alanyl-L-cysteine + H2O = L-cysteine + L-alanine. The catalysed reaction is (S)-lactate + L-phenylalanine = N-[(S)-lactoyl]-L-phenylalanine + H2O. Inhibited by p-hydroxymercurybenzoate. The inhibitory concentration 50% (IC(50)) is 13 uM. Inhibited by bestatin. The inhibitory concentration 50% (IC(50)) is 7 nM at pH 9.5. In terms of biological role, catalyzes the peptide bond hydrolysis in dipeptides, displaying a non-redundant activity toward threonyl dipeptides. Mediates threonyl dipeptide catabolism in a tissue-specific way. Has high dipeptidase activity toward cysteinylglycine, an intermediate metabolite in glutathione metabolism. Metabolizes N-lactoyl-amino acids, both through hydrolysis to form lactic acid and amino acids, as well as through their formation by reverse proteolysis. Plays a role in the regulation of cell cycle arrest and apoptosis. This is Cytosolic non-specific dipeptidase from Homo sapiens (Human).